The chain runs to 623 residues: Leucine-rich repeat, immunoglobulin-like domain and transmembrane domain-containing protein 1 (623 aa).

Residues methionine 1 to serine 21 form the signal peptide. Residues phenylalanine 22–proline 59 form the LRRNT domain. The Lumenal portion of the chain corresponds to phenylalanine 22 to arginine 526. LRR repeat units lie at residues aspartate 60 to proline 81, arginine 84 to glycine 105, arginine 108 to lysine 128, glutamine 132 to phenylalanine 153, and asparagine 156 to threonine 177. Asparagine 156 is a glycosylation site (N-linked (GlcNAc...) asparagine). Residues asparagine 201–serine 253 enclose the LRRCT domain. The region spanning proline 266–asparagine 332 is the Ig-like C2-type domain. A disulfide bond links cysteine 275 and cysteine 328. Asparagine 296 and asparagine 455 each carry an N-linked (GlcNAc...) asparagine glycan. Residues methionine 430–valine 518 enclose the Fibronectin type-III domain. An LRR 6 repeat occupies glutamine 525–cysteine 548. A helical transmembrane segment spans residues leucine 527–valine 547. Over cysteine 548 to cysteine 623 the chain is Cytoplasmic.

As to quaternary structure, homodimer. Interacts with LRIT2; may form a heterodimer with LRIT2. Interacts (via its N-terminal extracellular domain) with metabotropic glutamate receptor GRM6. Interacts (via its extreme C-terminus) with the scaffold protein FRMPD2 (via the third PDZ domain); the interaction leads to their colocalization in photoreceptor synapses. In terms of tissue distribution, retina, outer segments of photoreceptor cells.

It localises to the endoplasmic reticulum membrane. The protein localises to the cell projection. Its subcellular location is the dendrite. Photoreceptor synaptic protein essential for normal vision. Involved in synapse formation in cone photoreceptor cells. In Rattus norvegicus (Rat), this protein is Leucine-rich repeat, immunoglobulin-like domain and transmembrane domain-containing protein 1 (Lrit1).